The primary structure comprises 38 residues: Photosystem II reaction center protein L (38 aa).

Residues 17 to 37 form a helical membrane-spanning segment; it reads SLYWGLLLIFVLAVLFSSYIF.

It belongs to the PsbL family. In terms of assembly, PSII is composed of 1 copy each of membrane proteins PsbA, PsbB, PsbC, PsbD, PsbE, PsbF, PsbH, PsbI, PsbJ, PsbK, PsbL, PsbM, PsbT, PsbX, PsbY, PsbZ, Psb30/Ycf12, at least 3 peripheral proteins of the oxygen-evolving complex and a large number of cofactors. It forms dimeric complexes.

It localises to the plastid. It is found in the chloroplast thylakoid membrane. Its function is as follows. One of the components of the core complex of photosystem II (PSII). PSII is a light-driven water:plastoquinone oxidoreductase that uses light energy to abstract electrons from H(2)O, generating O(2) and a proton gradient subsequently used for ATP formation. It consists of a core antenna complex that captures photons, and an electron transfer chain that converts photonic excitation into a charge separation. This subunit is found at the monomer-monomer interface and is required for correct PSII assembly and/or dimerization. The polypeptide is Photosystem II reaction center protein L (Oltmannsiellopsis viridis (Marine flagellate)).